Reading from the N-terminus, the 160-residue chain is Transcriptional repressor NrdR (160 aa).

A zinc finger lies at 3–34 (CPFCGNADTQVVDSRVSEEGDTIRRRRRCLSC). One can recognise an ATP-cone domain in the interval 49–139 (PSVVKRDGSR…VYKSFEDIGE (91 aa)).

It belongs to the NrdR family. The cofactor is Zn(2+).

In terms of biological role, negatively regulates transcription of bacterial ribonucleotide reductase nrd genes and operons by binding to NrdR-boxes. The polypeptide is Transcriptional repressor NrdR (Bordetella bronchiseptica (strain ATCC BAA-588 / NCTC 13252 / RB50) (Alcaligenes bronchisepticus)).